A 77-amino-acid polypeptide reads, in one-letter code: MADVMERVTKIIVDRLGVEESEVKLESSFKEDLKADSLDVVELVMELEDEFDMEIADEDAEKIATVKDVVDYINNNQ.

Residues 2–77 form the Carrier domain; the sequence is ADVMERVTKI…DVVDYINNNQ (76 aa). Residue S37 is modified to O-(pantetheine 4'-phosphoryl)serine.

The protein belongs to the acyl carrier protein (ACP) family. In terms of processing, 4'-phosphopantetheine is transferred from CoA to a specific serine of apo-ACP by AcpS. This modification is essential for activity because fatty acids are bound in thioester linkage to the sulfhydryl of the prosthetic group.

The protein localises to the cytoplasm. It participates in lipid metabolism; fatty acid biosynthesis. Carrier of the growing fatty acid chain in fatty acid biosynthesis. The protein is Acyl carrier protein of Shouchella clausii (strain KSM-K16) (Alkalihalobacillus clausii).